The sequence spans 1673 residues: Protein-methionine sulfoxide oxidase mical3b (1673 aa).

The segment at 2-492 is monooxygenase domain; the sequence is WDGQSEMCQA…RHLIDTGEGP (491 aa). FAD is bound by residues C96, 96–124, E115, R117, R122, N124, and D396; that span reads CGLR…SRNN. The Calponin-homology (CH) domain maps to 512–618; sequence MARYSKLLSW…YLSQLHELLK (107 aa). The disordered stretch occupies residues 647–714; sequence SKLGQSLSRK…PKASEGHSKV (68 aa). A compositionally biased stretch (basic and acidic residues) spans 661-671; it reads DKKEKEADSVG. One can recognise an LIM zinc-binding domain in the interval 791 to 853; it reads DVCYFCGRRV…KHHFSFRLAS (63 aa). Residues 882-892 are compositionally biased toward low complexity; that stretch reads LSSLGSVGTAT. 5 disordered regions span residues 882 to 901, 918 to 938, 951 to 1100, 1159 to 1188, and 1357 to 1393; these read LSSL…SSTH, RIEL…LQEV, SLQE…KRSE, QSAR…TDGD, and GPDA…RETG. The span at 973–992 shows a compositional bias: basic and acidic residues; it reads LVWKKGEELHARTNGERKLD. Composition is skewed to acidic residues over residues 993–1002 and 1010–1041; these read LEEELKEEEG and EGEE…DPDI. A compositionally biased stretch (low complexity) spans 1081 to 1094; sequence SDLTPDPSTTPESS. Polar residues predominate over residues 1159–1182; it reads QSARICDSSTQTHSVTDLQETSPL. 2 coiled-coil regions span residues 1475 to 1531 and 1573 to 1638; these read EEEL…AVEK and QEKN…VEQR. Residues 1495-1661 enclose the bMERB domain; sequence KQEELRRLHR…EKEEDSDLEA (167 aa).

It belongs to the Mical family. The cofactor is FAD.

The protein resides in the cytoplasm. Its subcellular location is the cytoskeleton. The protein localises to the nucleus. It carries out the reaction L-methionyl-[F-actin] + NADPH + O2 + H(+) = L-methionyl-(R)-S-oxide-[F-actin] + NADP(+) + H2O. In terms of biological role, monooxygenase that promotes depolymerization of F-actin by mediating oxidation of specific methionine residues on actin. Acts by modifying actin subunits through the addition of oxygen to form methionine-sulfoxide, leading to promote actin filament severing and prevent repolymerization. Involved in exocytic vesicles tethering and fusion: the monooxygenase activity is required for this process. This Danio rerio (Zebrafish) protein is Protein-methionine sulfoxide oxidase mical3b (mical3b).